The following is a 155-amino-acid chain: Large ribosomal subunit protein uL22c (155 aa).

This sequence belongs to the universal ribosomal protein uL22 family. In terms of assembly, part of the 50S ribosomal subunit.

It is found in the plastid. The protein resides in the chloroplast. This protein binds specifically to 23S rRNA. Functionally, the globular domain of the protein is located near the polypeptide exit tunnel on the outside of the subunit, while an extended beta-hairpin is found that lines the wall of the exit tunnel in the center of the 70S ribosome. The protein is Large ribosomal subunit protein uL22c (rpl22) of Solanum bulbocastanum (Wild potato).